Here is a 72-residue protein sequence, read N- to C-terminus: MEKPTSSTNGEKRKSPCDSNSKNDEMQETPNRDLVLEPSLKKMKTSEYSTVLVLCYRKTKKIHSNQLENDQS.

The disordered stretch occupies residues 1 to 40; sequence MEKPTSSTNGEKRKSPCDSNSKNDEMQETPNRDLVLEPSL. The segment covering 10-35 has biased composition (basic and acidic residues); that stretch reads GEKRKSPCDSNSKNDEMQETPNRDLV.

It belongs to the SPAN-X family.

This chain is Sperm protein associated with the nucleus on the X chromosome N1 (SPANXN1), found in Pan troglodytes (Chimpanzee).